We begin with the raw amino-acid sequence, 204 residues long: Peptide deformylase (204 aa).

The Fe cation site is built by Cys131 and His174. Glu175 is an active-site residue. Residue His178 coordinates Fe cation.

It belongs to the polypeptide deformylase family. The cofactor is Fe(2+).

It carries out the reaction N-terminal N-formyl-L-methionyl-[peptide] + H2O = N-terminal L-methionyl-[peptide] + formate. Removes the formyl group from the N-terminal Met of newly synthesized proteins. Requires at least a dipeptide for an efficient rate of reaction. N-terminal L-methionine is a prerequisite for activity but the enzyme has broad specificity at other positions. This Streptococcus mutans serotype c (strain ATCC 700610 / UA159) protein is Peptide deformylase.